The sequence spans 557 residues: Dihydroxy-acid dehydratase (557 aa).

Residue Asp-78 coordinates Mg(2+). Cys-119 contributes to the [2Fe-2S] cluster binding site. Positions 120 and 121 each coordinate Mg(2+). Position 121 is an N6-carboxylysine (Lys-121). Residue Cys-192 participates in [2Fe-2S] cluster binding. Glu-442 contacts Mg(2+). The active-site Proton acceptor is Ser-468.

The protein belongs to the IlvD/Edd family. Homodimer. [2Fe-2S] cluster serves as cofactor. It depends on Mg(2+) as a cofactor.

The enzyme catalyses (2R)-2,3-dihydroxy-3-methylbutanoate = 3-methyl-2-oxobutanoate + H2O. It catalyses the reaction (2R,3R)-2,3-dihydroxy-3-methylpentanoate = (S)-3-methyl-2-oxopentanoate + H2O. Its pathway is amino-acid biosynthesis; L-isoleucine biosynthesis; L-isoleucine from 2-oxobutanoate: step 3/4. It functions in the pathway amino-acid biosynthesis; L-valine biosynthesis; L-valine from pyruvate: step 3/4. In terms of biological role, functions in the biosynthesis of branched-chain amino acids. Catalyzes the dehydration of (2R,3R)-2,3-dihydroxy-3-methylpentanoate (2,3-dihydroxy-3-methylvalerate) into 2-oxo-3-methylpentanoate (2-oxo-3-methylvalerate) and of (2R)-2,3-dihydroxy-3-methylbutanoate (2,3-dihydroxyisovalerate) into 2-oxo-3-methylbutanoate (2-oxoisovalerate), the penultimate precursor to L-isoleucine and L-valine, respectively. The sequence is that of Dihydroxy-acid dehydratase from Bacillus thuringiensis subsp. konkukian (strain 97-27).